Reading from the N-terminus, the 166-residue chain is Putative membrane protein 162 (166 aa).

Residue Met-1 is a topological domain, intravirion. Residues 2-22 form a helical membrane-spanning segment; sequence YYPAVQVLIGIILVDNFNTEF. At 23-166 the chain is on the virion surface side; the sequence is LSSEKKNCKT…TIMGIARNIL (144 aa).

It belongs to the asfivirus envelope protein p22 family.

The protein resides in the virion membrane. It localises to the host cell membrane. In African swine fever virus (isolate Tick/Malawi/Lil 20-1/1983) (ASFV), this protein is Putative membrane protein 162.